A 156-amino-acid polypeptide reads, in one-letter code: Small ribosomal subunit protein uS7 (156 aa).

This sequence belongs to the universal ribosomal protein uS7 family. Part of the 30S ribosomal subunit. Contacts proteins S9 and S11.

In terms of biological role, one of the primary rRNA binding proteins, it binds directly to 16S rRNA where it nucleates assembly of the head domain of the 30S subunit. Is located at the subunit interface close to the decoding center, probably blocks exit of the E-site tRNA. This Bartonella quintana (strain Toulouse) (Rochalimaea quintana) protein is Small ribosomal subunit protein uS7.